Reading from the N-terminus, the 189-residue chain is ComE operon protein 2 (189 aa).

One can recognise a CMP/dCMP-type deaminase domain in the interval 5–132 (SWNQYFMAQS…PYAQELFEQA (128 aa)). Histidine 70 contacts Zn(2+). The active-site Proton donor is glutamate 72. Cysteine 98 and cysteine 101 together coordinate Zn(2+).

Belongs to the cytidine and deoxycytidylate deaminase family. Requires Zn(2+) as cofactor.

Its function is as follows. Dispensable for transformability. The chain is ComE operon protein 2 (comEB) from Bacillus subtilis (strain 168).